The primary structure comprises 106 residues: Small ribosomal subunit protein bS20 (106 aa).

Positions 1-20 (MATAKPKKKNPRLASGRKRV) are enriched in basic residues. The segment at 1 to 21 (MATAKPKKKNPRLASGRKRVR) is disordered.

The protein belongs to the bacterial ribosomal protein bS20 family.

Functionally, binds directly to 16S ribosomal RNA. The polypeptide is Small ribosomal subunit protein bS20 (Polaromonas naphthalenivorans (strain CJ2)).